The primary structure comprises 747 residues: Photosystem I P700 chlorophyll a apoprotein A2 (747 aa).

Helical transmembrane passes span 46 to 69 (LFAT…FHIA), 135 to 158 (LFQG…LHLQ), 175 to 199 (LNHH…HVAI), 273 to 291 (IAHH…GHMY), 341 to 364 (LHFQ…QHMG), 380 to 406 (SALY…IFFV), 428 to 450 (ALIS…IYVH), and 530 to 548 (FLVH…LILI). [4Fe-4S] cluster-binding residues include C572 and C581. Helical transmembrane passes span 588 to 609 (ATYL…YWHW) and 656 to 678 (LSPW…MFLI). Residues H667, M675, and Y683 each contribute to the divinyl chlorophyll a site. W684 is a binding site for phylloquinone. Residues 720-740 (LVGLTHFTVGNFVTFGAFVIA) traverse the membrane as a helical segment.

Belongs to the PsaA/PsaB family. As to quaternary structure, the PsaA/B heterodimer binds the P700 divinyl chlorophyll special pair and subsequent electron acceptors. PSI consists of a core antenna complex that captures photons, and an electron transfer chain that converts photonic excitation into a charge separation. The cyanobacterial PSI reaction center is composed of one copy each of PsaA,B,C,D,E,F,I,J,K,L,M and X, and forms trimeric complexes. It depends on PSI electron transfer chain: 5 divinyl chlorophyll a, 1 divinyl chlorophyll a', 2 phylloquinones and 3 4Fe-4S clusters. PSI core antenna: 90 divinyl chlorophyll a, 22 carotenoids, 3 phospholipids and 1 galactolipid. P700 is a divinyl chlorophyll a/divinyl chlorophyll a' dimer, A0 is one or more divinyl chlorophyll a, A1 is one or both phylloquinones and FX is a shared 4Fe-4S iron-sulfur center. as a cofactor.

Its subcellular location is the cellular thylakoid membrane. The catalysed reaction is reduced [plastocyanin] + hnu + oxidized [2Fe-2S]-[ferredoxin] = oxidized [plastocyanin] + reduced [2Fe-2S]-[ferredoxin]. Its function is as follows. PsaA and PsaB bind P700, the primary electron donor of photosystem I (PSI), as well as the electron acceptors A0, A1 and FX. PSI is a plastocyanin/cytochrome c6-ferredoxin oxidoreductase, converting photonic excitation into a charge separation, which transfers an electron from the donor P700 chlorophyll pair to the spectroscopically characterized acceptors A0, A1, FX, FA and FB in turn. Oxidized P700 is reduced on the lumenal side of the thylakoid membrane by plastocyanin or cytochrome c6. The polypeptide is Photosystem I P700 chlorophyll a apoprotein A2 (Prochlorococcus marinus (strain SARG / CCMP1375 / SS120)).